The chain runs to 456 residues: MATNADPAPTKKPRNSRKALKQKNELVETPPSPVSVKGKSAKSFEQDLMEMQTMLEKMKIEKDKTEELLKEKDEILRKKEEELETRDAEQEKLKVELKKLQKMKEFKPNMTFACGQSSLTQAEQEKANKKKKKDCPETKRPSSSYVLWCKDQWTEVKKENPEADFKETSNILGAKWKSLSAEDKKPYEERYQVEKEAYLQVIAKEKREKEAMKLLEDDQKQRTAMELLDQYLNFVQEAEQDNKKKNKKEKDPLKPKHPVSAFLVYANERRAALREENKSVVEVAKITGEEWKNLSDKKKAPYEKVAKKNKETYLQAMEEYKRTKEEEALSQKKEEEELLKLHKQEALQMLKKKEKTDNLIKKEKATKKKKNENVDPNKPKKPASSYFLFSKDERKKLTEERPGTNNATVTALISLKWKELSEEEKQVYNGKAAKLMEAYKKEVEAYNKKSAATTSS.

Disordered regions lie at residues M1–K42, S117–S142, A238–P258, and M349–F389. The span at K11 to K21 shows a compositional bias: basic residues. The HMG box 1 DNA-binding region spans T138–K206. Positions Q240–K254 are enriched in basic and acidic residues. The HMG box 2 DNA-binding region spans P255–K321. Basic and acidic residues predominate over residues E354–E363. Residues P379–N447 constitute a DNA-binding region (HMG box 3).

It is found in the nucleus. This chain is High mobility group B protein 6 (HMGB6), found in Arabidopsis thaliana (Mouse-ear cress).